Here is a 365-residue protein sequence, read N- to C-terminus: S-adenosylmethionine:tRNA ribosyltransferase-isomerase (365 aa).

This sequence belongs to the QueA family. As to quaternary structure, monomer.

The protein localises to the cytoplasm. It catalyses the reaction 7-aminomethyl-7-carbaguanosine(34) in tRNA + S-adenosyl-L-methionine = epoxyqueuosine(34) in tRNA + adenine + L-methionine + 2 H(+). The protein operates within tRNA modification; tRNA-queuosine biosynthesis. In terms of biological role, transfers and isomerizes the ribose moiety from AdoMet to the 7-aminomethyl group of 7-deazaguanine (preQ1-tRNA) to give epoxyqueuosine (oQ-tRNA). The protein is S-adenosylmethionine:tRNA ribosyltransferase-isomerase of Prochlorococcus marinus (strain NATL2A).